The following is a 672-amino-acid chain: Amidase chyE (672 aa).

Residue Cys2 is the Nucleophile of the active site. Residues 2–219 (CGISAFLCHP…PGHYLISRPN (218 aa)) enclose the Glutamine amidotransferase type-2 domain. The 390-residue stretch at 250-639 (VRKRLLEAVK…TQEAVEKAFT (390 aa)) folds into the Asparagine synthetase domain.

It belongs to the asparagine synthetase family.

It functions in the pathway pigment biosynthesis. Amidase; part of the gene cluster that mediates the biosynthesis of the yellow pigment chrysogine. the NRPS chyA mediates the condensation of anthranilic acid and alanine into the intermediate 2-(2-aminopropanamido)benzoic acid. The remainder of the pathway is highly branched yielding at least 13 chrysogine-related compounds. The malonyl transferase chyE converts 2-(2-aminopropanamido)benzoic acid and 2-(2-aminopropanamido)benzamidine into 2-(2-(2-carboxyacetamido)propanamido)benzoic acid and 3-((1-((2-carbamoylphenyl)amino)-1-oxopropan-2-yl)amino)-3-oxopropanoic acid, respectively. ChyD is an amidase, being responsible for the amidation of the carboxylic acid moiety of 2-(2-aminopropanamido)benzoic acid, 2-(2-(2-carboxyacetamido)propanamido)benzoic acid and 2-(2-((4-amino-1-carboxy-4-oxobutyl)amino)propanamido)benzoic acid. ChyC is involved in the same reactions as ChyD, but plays a more minor role in the amidation reactions compared to chyD. The oxidoreductases chyH and chyM are involved in oxidation reactions that form N-pyruvoylanthranilamide from 2-(2-aminopropanamido)benzamidine and (1-((2-carbamoylphenyl)amino)-1-oxopropan-2-yl)glutamine, respectively. N-pyruvoylanthranilamide is further converted via two further branches in the pathway, yielding chrysogine and additional chrysogine-related coumpounds. Chrysogine is likely formed by a spontaneous ring closure from N-pyruvoylanthranilamide. In Penicillium rubens (strain ATCC 28089 / DSM 1075 / NRRL 1951 / Wisconsin 54-1255) (Penicillium chrysogenum), this protein is Amidase chyE.